We begin with the raw amino-acid sequence, 110 residues long: Single-stranded DNA-binding protein 1 (110 aa).

An SSB domain is found at 1–104 (MNKILLIGRM…VVGEEVQFLE (104 aa)).

Homotetramer.

The sequence is that of Single-stranded DNA-binding protein 1 (ssb1) from Clostridium acetobutylicum (strain ATCC 824 / DSM 792 / JCM 1419 / IAM 19013 / LMG 5710 / NBRC 13948 / NRRL B-527 / VKM B-1787 / 2291 / W).